Reading from the N-terminus, the 166-residue chain is NAD(P)H-quinone oxidoreductase subunit I, chloroplastic (166 aa).

4Fe-4S ferredoxin-type domains follow at residues 55-84 and 95-124; these read GRIH…VDWK and LNYS…MTEE. Residues Cys64, Cys67, Cys70, Cys74, Cys104, Cys107, Cys110, and Cys114 each coordinate [4Fe-4S] cluster.

It belongs to the complex I 23 kDa subunit family. As to quaternary structure, NDH is composed of at least 16 different subunits, 5 of which are encoded in the nucleus. Requires [4Fe-4S] cluster as cofactor.

The protein resides in the plastid. Its subcellular location is the chloroplast thylakoid membrane. It carries out the reaction a plastoquinone + NADH + (n+1) H(+)(in) = a plastoquinol + NAD(+) + n H(+)(out). It catalyses the reaction a plastoquinone + NADPH + (n+1) H(+)(in) = a plastoquinol + NADP(+) + n H(+)(out). Functionally, NDH shuttles electrons from NAD(P)H:plastoquinone, via FMN and iron-sulfur (Fe-S) centers, to quinones in the photosynthetic chain and possibly in a chloroplast respiratory chain. The immediate electron acceptor for the enzyme in this species is believed to be plastoquinone. Couples the redox reaction to proton translocation, and thus conserves the redox energy in a proton gradient. In Polymnia canadensis (White-flowered leaf-cup), this protein is NAD(P)H-quinone oxidoreductase subunit I, chloroplastic.